Consider the following 281-residue polypeptide: NADPH-dependent 7-cyano-7-deazaguanine reductase (281 aa).

Substrate is bound at residue 88–90 (IES). 90-91 (SK) contributes to the NADPH binding site. The active-site Thioimide intermediate is Cys-189. The Proton donor role is filled by Asp-196. Substrate is bound at residue 228 to 229 (HE). Position 257-258 (257-258 (RG)) interacts with NADPH.

The protein belongs to the GTP cyclohydrolase I family. QueF type 2 subfamily. As to quaternary structure, homodimer.

The protein resides in the cytoplasm. The catalysed reaction is 7-aminomethyl-7-carbaguanine + 2 NADP(+) = 7-cyano-7-deazaguanine + 2 NADPH + 3 H(+). It functions in the pathway tRNA modification; tRNA-queuosine biosynthesis. Catalyzes the NADPH-dependent reduction of 7-cyano-7-deazaguanine (preQ0) to 7-aminomethyl-7-deazaguanine (preQ1). The chain is NADPH-dependent 7-cyano-7-deazaguanine reductase from Yersinia enterocolitica serotype O:8 / biotype 1B (strain NCTC 13174 / 8081).